Reading from the N-terminus, the 946-residue chain is ATP-dependent 6-phosphofructokinase subunit beta (946 aa).

An N-terminal catalytic PFK domain 1 region spans residues methionine 1 to threonine 559. ATP is bound by residues glycine 192, arginine 256–cysteine 257, and glycine 286–serine 289. Aspartate 287 is a Mg(2+) binding site. Beta-D-fructose 6-phosphate is bound by residues serine 332–aspartate 334, arginine 369, methionine 376–arginine 378, glutamate 433, arginine 461, and histidine 467–arginine 470. The active-site Proton acceptor is the aspartate 334. An interdomain linker region spans residues alanine 560–lysine 573. Positions lysine 574–proline 946 are C-terminal regulatory PFK domain 2. Residues arginine 644, threonine 702–asparagine 706, glutamine 747–glycine 749, lysine 833, histidine 839–glutamine 842, and arginine 920 contribute to the beta-D-fructose 2,6-bisphosphate site.

The protein belongs to the phosphofructokinase type A (PFKA) family. ATP-dependent PFK group I subfamily. Eukaryotic two domain clade 'E' sub-subfamily. Heterooctamer of 4 alpha and 4 beta chains. It depends on Mg(2+) as a cofactor.

The protein localises to the cytoplasm. The catalysed reaction is beta-D-fructose 6-phosphate + ATP = beta-D-fructose 1,6-bisphosphate + ADP + H(+). It participates in carbohydrate degradation; glycolysis; D-glyceraldehyde 3-phosphate and glycerone phosphate from D-glucose: step 3/4. With respect to regulation, allosterically activated by ADP, AMP, or fructose 2,6-bisphosphate, and allosterically inhibited by ATP or citrate. Functionally, catalyzes the phosphorylation of D-fructose 6-phosphate to fructose 1,6-bisphosphate by ATP, the first committing step of glycolysis. In Candida albicans (Yeast), this protein is ATP-dependent 6-phosphofructokinase subunit beta (PFK2).